The primary structure comprises 197 residues: C-type lectin domain family 3 member A (197 aa).

The first 22 residues, 1–22, serve as a signal peptide directing secretion; the sequence is MAKNGLVICILVITLLLDQTTS. Disulfide bonds link C68-C78, C95-C191, and C167-C183. The region spanning 74–192 is the C-type lectin domain; it reads VHKKCYLASE…CRSSKRYICE (119 aa).

In terms of tissue distribution, restricted to cartilage and breast. Also expressed in breast cancers.

The protein resides in the secreted. Its function is as follows. Promotes cell adhesion to laminin-332 and fibronectin. The polypeptide is C-type lectin domain family 3 member A (CLEC3A) (Homo sapiens (Human)).